A 346-amino-acid polypeptide reads, in one-letter code: Protein RecA (346 aa).

64–71 is an ATP binding site; that stretch reads GPESSGKT.

The protein belongs to the RecA family.

The protein resides in the cytoplasm. Its function is as follows. Can catalyze the hydrolysis of ATP in the presence of single-stranded DNA, the ATP-dependent uptake of single-stranded DNA by duplex DNA, and the ATP-dependent hybridization of homologous single-stranded DNAs. It interacts with LexA causing its activation and leading to its autocatalytic cleavage. The sequence is that of Protein RecA from Bacillus pumilus (strain SAFR-032).